A 203-amino-acid polypeptide reads, in one-letter code: Glycerol-3-phosphate acyltransferase (203 aa).

Helical transmembrane passes span 3 to 23 (NLIL…LILA), 61 to 81 (ILTV…ASFL), 87 to 107 (VLWT…FLGF), 118 to 138 (GVLA…WFLV), 144 to 164 (ISSL…FIIH), and 172 to 192 (THAP…PNIV).

This sequence belongs to the PlsY family. Probably interacts with PlsX.

It is found in the cell inner membrane. It catalyses the reaction an acyl phosphate + sn-glycerol 3-phosphate = a 1-acyl-sn-glycero-3-phosphate + phosphate. Its pathway is lipid metabolism; phospholipid metabolism. Functionally, catalyzes the transfer of an acyl group from acyl-phosphate (acyl-PO(4)) to glycerol-3-phosphate (G3P) to form lysophosphatidic acid (LPA). This enzyme utilizes acyl-phosphate as fatty acyl donor, but not acyl-CoA or acyl-ACP. The chain is Glycerol-3-phosphate acyltransferase from Campylobacter concisus (strain 13826).